The primary structure comprises 322 residues: 4-diphosphocytidyl-2-C-methyl-D-erythritol kinase (322 aa).

Lysine 18 is a catalytic residue. Proline 130–serine 140 is an ATP binding site. Residue aspartate 172 is part of the active site.

This sequence belongs to the GHMP kinase family. IspE subfamily.

It carries out the reaction 4-CDP-2-C-methyl-D-erythritol + ATP = 4-CDP-2-C-methyl-D-erythritol 2-phosphate + ADP + H(+). The protein operates within isoprenoid biosynthesis; isopentenyl diphosphate biosynthesis via DXP pathway; isopentenyl diphosphate from 1-deoxy-D-xylulose 5-phosphate: step 3/6. Its function is as follows. Catalyzes the phosphorylation of the position 2 hydroxy group of 4-diphosphocytidyl-2C-methyl-D-erythritol. The polypeptide is 4-diphosphocytidyl-2-C-methyl-D-erythritol kinase (Psychrobacter arcticus (strain DSM 17307 / VKM B-2377 / 273-4)).